A 381-amino-acid polypeptide reads, in one-letter code: Protein-glutamate methylesterase/protein-glutamine glutaminase (381 aa).

A Response regulatory domain is found at R20–H138. The residue at position 71 (D71) is a 4-aspartylphosphate. The interval P154–H176 is disordered. In terms of domain architecture, CheB-type methylesterase spans P183 to V373. Active-site residues include S197, H225, and D321.

Belongs to the CheB family. Post-translationally, phosphorylated by CheA. Phosphorylation of the N-terminal regulatory domain activates the methylesterase activity.

It localises to the cytoplasm. The catalysed reaction is [protein]-L-glutamate 5-O-methyl ester + H2O = L-glutamyl-[protein] + methanol + H(+). It carries out the reaction L-glutaminyl-[protein] + H2O = L-glutamyl-[protein] + NH4(+). Its function is as follows. Involved in chemotaxis. Part of a chemotaxis signal transduction system that modulates chemotaxis in response to various stimuli. Catalyzes the demethylation of specific methylglutamate residues introduced into the chemoreceptors (methyl-accepting chemotaxis proteins or MCP) by CheR. Also mediates the irreversible deamidation of specific glutamine residues to glutamic acid. The sequence is that of Protein-glutamate methylesterase/protein-glutamine glutaminase from Nitrobacter hamburgensis (strain DSM 10229 / NCIMB 13809 / X14).